The primary structure comprises 295 residues: Probable aspartoacylase (295 aa).

Zn(2+)-binding residues include histidine 13 and glutamate 16. Residues arginine 54 and 61-62 (NR) contribute to the substrate site. Histidine 100 serves as a coordination point for Zn(2+). Substrate-binding residues include glutamate 158 and tyrosine 268.

This sequence belongs to the AspA/AstE family. Aspartoacylase subfamily. Requires Zn(2+) as cofactor.

The enzyme catalyses an N-acyl-L-aspartate + H2O = a carboxylate + L-aspartate. This is Probable aspartoacylase from Prochlorococcus marinus subsp. pastoris (strain CCMP1986 / NIES-2087 / MED4).